The following is a 203-amino-acid chain: MKSIEDLIKKATELKSEGLSEGQISEELNVSRETITWLLTHAERATVPGPKDISVDWSMIGRSAYRLSHIAQALTEMIFDILDEKELDIDIVVGVALSGVPLASMVADHMGVGLAVYMPTKQMASQDVKPHGNLSTNFSDVSGRECVIVDDVITSGRTLEEAVAYLDDRGAKTNVIAVLIDKKGIDSIAGVPVCSLLKVIRVN.

This sequence belongs to the purine/pyrimidine phosphoribosyltransferase family. GfcR subfamily.

The chain is Transcriptional regulator GfcR from Methanothrix thermoacetophila (strain DSM 6194 / JCM 14653 / NBRC 101360 / PT) (Methanosaeta thermophila).